We begin with the raw amino-acid sequence, 285 residues long: Ribosomal RNA small subunit methyltransferase I (285 aa).

This sequence belongs to the methyltransferase superfamily. RsmI family.

The protein resides in the cytoplasm. The enzyme catalyses cytidine(1402) in 16S rRNA + S-adenosyl-L-methionine = 2'-O-methylcytidine(1402) in 16S rRNA + S-adenosyl-L-homocysteine + H(+). Catalyzes the 2'-O-methylation of the ribose of cytidine 1402 (C1402) in 16S rRNA. This chain is Ribosomal RNA small subunit methyltransferase I, found in Buchnera aphidicola subsp. Schizaphis graminum (strain Sg).